Consider the following 262-residue polypeptide: Apolipoprotein A-I-1 (262 aa).

The N-terminal stretch at methionine 1 to alanine 18 is a signal peptide. Residues valine 32–lysine 63 are 3 X approximate tandem repeats. Tandem repeats lie at residues methionine 64 to alanine 85 and tyrosine 87 to methionine 107. Residues methionine 64–alanine 262 form a 10 X approximate tandem repeats region. Residues lysine 108–glutamate 118 form a 3; half-length repeat. Tandem repeats lie at residues proline 119 to glutamate 140, proline 141 to glutamate 162, proline 163 to methionine 184, proline 185 to alanine 206, and proline 207 to serine 228. A 9; half-length repeat occupies proline 229–glycine 239. Repeat 10 spans residues proline 240 to alanine 262.

The protein belongs to the apolipoprotein A1/A4/E family.

The protein resides in the secreted. Functionally, participates in the reverse transport of cholesterol from tissues to the liver for excretion by promoting cholesterol efflux from tissues and by acting as a cofactor for the lecithin cholesterol acyltransferase (LCAT). The protein is Apolipoprotein A-I-1 of Oncorhynchus mykiss (Rainbow trout).